Consider the following 383-residue polypeptide: 8-amino-7-oxononanoate synthase (383 aa).

Arg-21 contacts substrate. 108-109 (GY) is a pyridoxal 5'-phosphate binding site. A substrate-binding site is contributed by His-133. Ser-179, His-207, and Thr-233 together coordinate pyridoxal 5'-phosphate. Residue Lys-236 is modified to N6-(pyridoxal phosphate)lysine. Position 350 (Thr-350) interacts with substrate.

Belongs to the class-II pyridoxal-phosphate-dependent aminotransferase family. BioF subfamily. As to quaternary structure, homodimer. Pyridoxal 5'-phosphate serves as cofactor.

The catalysed reaction is 6-carboxyhexanoyl-[ACP] + L-alanine + H(+) = (8S)-8-amino-7-oxononanoate + holo-[ACP] + CO2. The protein operates within cofactor biosynthesis; biotin biosynthesis. In terms of biological role, catalyzes the decarboxylative condensation of pimeloyl-[acyl-carrier protein] and L-alanine to produce 8-amino-7-oxononanoate (AON), [acyl-carrier protein], and carbon dioxide. The polypeptide is 8-amino-7-oxononanoate synthase (Serratia proteamaculans (strain 568)).